Consider the following 294-residue polypeptide: Probable 2-(5''-triphosphoribosyl)-3'-dephosphocoenzyme-A synthase (294 aa).

It belongs to the CitG/MdcB family.

It carries out the reaction 3'-dephospho-CoA + ATP = 2'-(5''-triphospho-alpha-D-ribosyl)-3'-dephospho-CoA + adenine. The protein is Probable 2-(5''-triphosphoribosyl)-3'-dephosphocoenzyme-A synthase of Streptococcus equi subsp. equi (strain 4047).